We begin with the raw amino-acid sequence, 380 residues long: Chaperone protein DnaJ (380 aa).

A J domain is found at Asp-5 to Gly-69. The CR-type zinc finger occupies Gly-135–Arg-217. 8 residues coordinate Zn(2+): Cys-148, Cys-151, Cys-165, Cys-168, Cys-191, Cys-194, Cys-205, and Cys-208. CXXCXGXG motif repeat units lie at residues Cys-148–Gly-155, Cys-165–Gly-172, Cys-191–Gly-198, and Cys-205–Gly-212.

Belongs to the DnaJ family. As to quaternary structure, homodimer. It depends on Zn(2+) as a cofactor.

The protein resides in the cytoplasm. Functionally, participates actively in the response to hyperosmotic and heat shock by preventing the aggregation of stress-denatured proteins and by disaggregating proteins, also in an autonomous, DnaK-independent fashion. Unfolded proteins bind initially to DnaJ; upon interaction with the DnaJ-bound protein, DnaK hydrolyzes its bound ATP, resulting in the formation of a stable complex. GrpE releases ADP from DnaK; ATP binding to DnaK triggers the release of the substrate protein, thus completing the reaction cycle. Several rounds of ATP-dependent interactions between DnaJ, DnaK and GrpE are required for fully efficient folding. Also involved, together with DnaK and GrpE, in the DNA replication of plasmids through activation of initiation proteins. The protein is Chaperone protein DnaJ of Parageobacillus thermoglucosidasius (Geobacillus thermoglucosidasius).